The chain runs to 125 residues: Fluoride-specific ion channel FluC (125 aa).

The next 4 helical transmembrane spans lie at 5-25 (LLVA…GALV), 29-49 (LGAG…FLIG), 66-86 (LFLA…SYET), and 95-115 (VGKA…LAFL). Residues glycine 74 and threonine 77 each contribute to the Na(+) site.

It belongs to the fluoride channel Fluc/FEX (TC 1.A.43) family.

It localises to the cell inner membrane. The catalysed reaction is fluoride(in) = fluoride(out). Na(+) is not transported, but it plays an essential structural role and its presence is essential for fluoride channel function. Its function is as follows. Fluoride-specific ion channel. Important for reducing fluoride concentration in the cell, thus reducing its toxicity. The polypeptide is Fluoride-specific ion channel FluC (Thermus thermophilus (strain ATCC 27634 / DSM 579 / HB8)).